Here is a 641-residue protein sequence, read N- to C-terminus: Phosphomethylpyrimidine synthase (641 aa).

Substrate is bound by residues Asn221, Met250, Tyr279, His315, 335–337, 376–379, and Glu415; these read SRG and DGLR. His419 provides a ligand contact to Zn(2+). A substrate-binding site is contributed by Tyr442. A Zn(2+)-binding site is contributed by His483. [4Fe-4S] cluster-binding residues include Cys563, Cys566, and Cys571.

Belongs to the ThiC family. As to quaternary structure, homodimer. The cofactor is [4Fe-4S] cluster.

The catalysed reaction is 5-amino-1-(5-phospho-beta-D-ribosyl)imidazole + S-adenosyl-L-methionine = 4-amino-2-methyl-5-(phosphooxymethyl)pyrimidine + CO + 5'-deoxyadenosine + formate + L-methionine + 3 H(+). The protein operates within cofactor biosynthesis; thiamine diphosphate biosynthesis. Functionally, catalyzes the synthesis of the hydroxymethylpyrimidine phosphate (HMP-P) moiety of thiamine from aminoimidazole ribotide (AIR) in a radical S-adenosyl-L-methionine (SAM)-dependent reaction. The sequence is that of Phosphomethylpyrimidine synthase from Rhodopseudomonas palustris (strain BisA53).